The chain runs to 182 residues: UPF0215 protein Pcal_0119 (182 aa).

Belongs to the UPF0215 family.

This is UPF0215 protein Pcal_0119 from Pyrobaculum calidifontis (strain DSM 21063 / JCM 11548 / VA1).